A 407-amino-acid chain; its full sequence is Serine/threonine transporter SstT (407 aa).

Helical transmembrane passes span 14 to 34 (GSLV…ATVS), 48 to 68 (FVGA…AASI), 82 to 102 (IVIL…LMSF), 141 to 161 (AVLT…GLAL), 192 to 212 (IGIF…AIAG), 216 to 236 (LLLV…PAIV), 290 to 310 (IPLG…ILTL), 316 to 336 (MGIQ…GVSA), and 363 to 383 (VAMQ…SAET).

Belongs to the dicarboxylate/amino acid:cation symporter (DAACS) (TC 2.A.23) family.

The protein resides in the cell inner membrane. It catalyses the reaction L-serine(in) + Na(+)(in) = L-serine(out) + Na(+)(out). The enzyme catalyses L-threonine(in) + Na(+)(in) = L-threonine(out) + Na(+)(out). Functionally, involved in the import of serine and threonine into the cell, with the concomitant import of sodium (symport system). The chain is Serine/threonine transporter SstT from Shewanella halifaxensis (strain HAW-EB4).